The sequence spans 160 residues: ATP synthase subunit b (160 aa).

A helical transmembrane segment spans residues 5–27 (IEQILTQIIAFLIMLGVLKKFVW).

It belongs to the ATPase B chain family. As to quaternary structure, F-type ATPases have 2 components, F(1) - the catalytic core - and F(0) - the membrane proton channel. F(1) has five subunits: alpha(3), beta(3), gamma(1), delta(1), epsilon(1). F(0) has three main subunits: a(1), b(2) and c(10-14). The alpha and beta chains form an alternating ring which encloses part of the gamma chain. F(1) is attached to F(0) by a central stalk formed by the gamma and epsilon chains, while a peripheral stalk is formed by the delta and b chains.

Its subcellular location is the cell inner membrane. Functionally, f(1)F(0) ATP synthase produces ATP from ADP in the presence of a proton or sodium gradient. F-type ATPases consist of two structural domains, F(1) containing the extramembraneous catalytic core and F(0) containing the membrane proton channel, linked together by a central stalk and a peripheral stalk. During catalysis, ATP synthesis in the catalytic domain of F(1) is coupled via a rotary mechanism of the central stalk subunits to proton translocation. In terms of biological role, component of the F(0) channel, it forms part of the peripheral stalk, linking F(1) to F(0). The polypeptide is ATP synthase subunit b (Protochlamydia amoebophila (strain UWE25)).